The primary structure comprises 640 residues: MGKIIGIDLGTTNSVVAVMEGGEPKVIINPEGSRVTPSVVAFTADGEPLVGAPAKRQAITNPKNTIFSIKRFMGRFYDEVTEEISMVPYKVVRGENNTVRVEVEVGGEKRLYTPQEISAMILQKLKQTAEEYLGVPVTEAVITVPAYFNDAQRKATKEAGEIAGLKVRRILNEPTAAALAYGLDKKDKELKIAVYDLGGGTYDISILELGDGVFEVKATNGDTHLGGDNFDQRLIDYIADEFQKQEGIDLRKDPMALQRLKEAAEKAKIELSSAMKTTVNLPFITATAEGPKHLVMEITRAKFEQLIEDLVARTIPPMEQALKDAKLRKEDIDEVILVGGSTRIPLVQRTVEEFFGKKANKSVNPDEVVAIGAAIQAGVLSGEVQDVLLLDVTPLNLGIETLGGVMTVLIPANTTIPTRKSEIFTTASDNQTSVEIHVLQGNREMAADNRSLGRFILDGIPPAPRGVPQIEVTFDIDANGILHVSARDKATGKEQSIRIEASSGLTPEEIERMREEARRHAAEDRKRREQIEKLNQADSLIYMTEKNLREYGDKLPADKRAKIESALERLKEVHKARNFDELDSAIAQLNQAWNEASQDLYRAQQAAGAQTSDGASAQADSGGVREADYEVIDEDDKDKQ.

Phosphothreonine; by autocatalysis is present on Thr201. A disordered region spans residues Leu600–Gln640. Over residues Ala607–Ala619 the composition is skewed to polar residues. A compositionally biased stretch (acidic residues) spans Tyr629–Gln640.

Belongs to the heat shock protein 70 family.

Acts as a chaperone. The chain is Chaperone protein DnaK (dnaK) from Rhodothermus marinus (Rhodothermus obamensis).